Here is a 42-residue protein sequence, read N- to C-terminus: Alpha-lactalbumin I (42 aa).

In terms of domain architecture, C-type lysozyme spans 1–42; it reads IDYRKCQASQILKEHGMDKVIPLPELVCTMFHISGLSPQAEV.

The protein belongs to the glycosyl hydrolase 22 family. Lactose synthase (LS) is a heterodimer of a catalytic component, beta1,4-galactosyltransferase (beta4Gal-T1) and a regulatory component, alpha-lactalbumin (LA). Mammary gland specific. Secreted in milk.

It is found in the secreted. In terms of biological role, regulatory subunit of lactose synthase, changes the substrate specificity of galactosyltransferase in the mammary gland making glucose a good acceptor substrate for this enzyme. This enables LS to synthesize lactose, the major carbohydrate component of milk. In other tissues, galactosyltransferase transfers galactose onto the N-acetylglucosamine of the oligosaccharide chains in glycoproteins. This is Alpha-lactalbumin I (LALBA) from Macropus giganteus (Eastern gray kangaroo).